The chain runs to 119 residues: Small ribosomal subunit protein bS6 (119 aa).

The segment at 95 to 119 (AVTEPSPLAKGNEKREDRKESEDAE) is disordered. Basic and acidic residues predominate over residues 105–119 (GNEKREDRKESEDAE).

The protein belongs to the bacterial ribosomal protein bS6 family.

Functionally, binds together with bS18 to 16S ribosomal RNA. In Halorhodospira halophila (strain DSM 244 / SL1) (Ectothiorhodospira halophila (strain DSM 244 / SL1)), this protein is Small ribosomal subunit protein bS6.